The chain runs to 86 residues: Serine protease inhibitor Kazal-type 2 (86 aa).

The first 16 residues, 1–16, serve as a signal peptide directing secretion; sequence MLRLVLLLLVTDFAAS. The 55-residue stretch at 32-86 folds into the Kazal-like domain; it reads QFRTPDCGHFDFPACPRNLNPVCGTDMNTYSNECTLCMKIREDGSHINIIKDEPC. 3 disulfide bridges follow: Cys-38/Cys-68, Cys-46/Cys-65, and Cys-54/Cys-86.

As to expression, expressed in sperm (at protein level). Expressed in testis but not in ovary, brain, heart, kidney or lung. Within testis, expressed in epididymis and germ cells.

The protein resides in the secreted. It localises to the cytoplasmic vesicle. Its subcellular location is the secretory vesicle. The protein localises to the acrosome. Its function is as follows. As a strong inhibitor of acrosin, it is required for normal spermiogenesis. It probably hinders premature activation of proacrosin and other proteases, thus preventing the cascade of events leading to spermiogenesis defects. May be involved in the regulation of serine protease-dependent germ cell apoptosis. It also inhibits trypsin. In Mus musculus (Mouse), this protein is Serine protease inhibitor Kazal-type 2 (Spink2).